A 224-amino-acid polypeptide reads, in one-letter code: UPF0758 protein RSc2444 (224 aa).

The MPN domain maps to threonine 102–methionine 224. Residues histidine 173, histidine 175, and aspartate 186 each contribute to the Zn(2+) site. Positions histidine 173 to aspartate 186 match the JAMM motif motif.

It belongs to the UPF0758 family.

In Ralstonia nicotianae (strain ATCC BAA-1114 / GMI1000) (Ralstonia solanacearum), this protein is UPF0758 protein RSc2444.